A 130-amino-acid chain; its full sequence is S-adenosylmethionine decarboxylase proenzyme (130 aa).

The Schiff-base intermediate with substrate; via pyruvic acid role is filled by Ser-63. Ser-63 carries the post-translational modification Pyruvic acid (Ser); by autocatalysis. His-68 functions as the Proton acceptor; for processing activity in the catalytic mechanism. The active-site Proton donor; for catalytic activity is the Cys-83.

It belongs to the prokaryotic AdoMetDC family. Type 1 subfamily. Heterotetramer of two alpha and two beta chains arranged as a dimer of alpha/beta heterodimers. Pyruvate is required as a cofactor. In terms of processing, is synthesized initially as an inactive proenzyme. Formation of the active enzyme involves a self-maturation process in which the active site pyruvoyl group is generated from an internal serine residue via an autocatalytic post-translational modification. Two non-identical subunits are generated from the proenzyme in this reaction, and the pyruvate is formed at the N-terminus of the alpha chain, which is derived from the carboxyl end of the proenzyme. The post-translation cleavage follows an unusual pathway, termed non-hydrolytic serinolysis, in which the side chain hydroxyl group of the serine supplies its oxygen atom to form the C-terminus of the beta chain, while the remainder of the serine residue undergoes an oxidative deamination to produce ammonia and the pyruvoyl group blocking the N-terminus of the alpha chain.

The enzyme catalyses S-adenosyl-L-methionine + H(+) = S-adenosyl 3-(methylsulfanyl)propylamine + CO2. It functions in the pathway amine and polyamine biosynthesis; S-adenosylmethioninamine biosynthesis; S-adenosylmethioninamine from S-adenosyl-L-methionine: step 1/1. Catalyzes the decarboxylation of S-adenosylmethionine to S-adenosylmethioninamine (dcAdoMet), the propylamine donor required for the synthesis of the polyamines spermine and spermidine from the diamine putrescine. The sequence is that of S-adenosylmethionine decarboxylase proenzyme from Thermosipho africanus (strain TCF52B).